The primary structure comprises 105 residues: Large ribosomal subunit protein uL24 (105 aa).

This sequence belongs to the universal ribosomal protein uL24 family. Part of the 50S ribosomal subunit.

In terms of biological role, one of two assembly initiator proteins, it binds directly to the 5'-end of the 23S rRNA, where it nucleates assembly of the 50S subunit. One of the proteins that surrounds the polypeptide exit tunnel on the outside of the subunit. The polypeptide is Large ribosomal subunit protein uL24 (Clostridium botulinum (strain ATCC 19397 / Type A)).